A 260-amino-acid chain; its full sequence is PsbP domain-containing protein 4, chloroplastic (260 aa).

This sequence belongs to the PsbP family.

Its subcellular location is the plastid. The protein resides in the chloroplast thylakoid lumen. The protein is PsbP domain-containing protein 4, chloroplastic (PPD4) of Arabidopsis thaliana (Mouse-ear cress).